Consider the following 336-residue polypeptide: MPITIGNGFLKSEILTNSPRNTKEAWWKVLWEKIKDFFFSTGKAKADRCLHEMLFAERAPTRERLTEIFFELKELACASQRDRFQVHNPHENDATIILRIMDQNEENELLRITQNTDTFSCEVMGNLYFLMKDRPDILKSHPQMTAMIKRRYSEIVDYPLPSTLCLNPAGAPILSVPLDNIEGYLYTELRKGHLDGWKAQEKATYLAAKIQSGIEKTTRILHHANISESTQQNAFLETMAMCGLKQLEIPPPHTHIPIEKMVKEVLLADKTFQAFLVTDPSTSQSMLAEIVEAISDQVFHAIFRIDPQAIQKMAEEQLTTLHVRSEQQSGCLCCFL.

An interaction with host PLEKHM2 region spans residues 1–330; it reads MPITIGNGFL…LHVRSEQQSG (330 aa).

It belongs to the Sif family. As to quaternary structure, interacts with host PLEKHM2. Interacts with SseJ; the interaction is indirect.

The protein localises to the secreted. Its subcellular location is the host cytoplasm. It is found in the host cell membrane. Effector proteins function to alter host cell physiology and promote bacterial survival in host tissues. This protein is required for endosomal tubulation and formation of Salmonella-induced filaments (Sifs), which are filamentous structures containing lysosomal membrane glycoproteins within epithelial cells. Sif formation is concomitant with intracellular bacterial replication. The sequence is that of Secreted effector protein SifA (sifA) from Salmonella typhimurium (strain LT2 / SGSC1412 / ATCC 700720).